The primary structure comprises 169 residues: ATP synthase subunit b (169 aa).

Residues 26-46 (FFFVLLIFLIVLGVIAKWVVP) form a helical membrane-spanning segment.

The protein belongs to the ATPase B chain family. In terms of assembly, F-type ATPases have 2 components, F(1) - the catalytic core - and F(0) - the membrane proton channel. F(1) has five subunits: alpha(3), beta(3), gamma(1), delta(1), epsilon(1). F(0) has three main subunits: a(1), b(2) and c(10-14). The alpha and beta chains form an alternating ring which encloses part of the gamma chain. F(1) is attached to F(0) by a central stalk formed by the gamma and epsilon chains, while a peripheral stalk is formed by the delta and b chains.

It is found in the cell membrane. Its function is as follows. F(1)F(0) ATP synthase produces ATP from ADP in the presence of a proton or sodium gradient. F-type ATPases consist of two structural domains, F(1) containing the extramembraneous catalytic core and F(0) containing the membrane proton channel, linked together by a central stalk and a peripheral stalk. During catalysis, ATP synthesis in the catalytic domain of F(1) is coupled via a rotary mechanism of the central stalk subunits to proton translocation. In terms of biological role, component of the F(0) channel, it forms part of the peripheral stalk, linking F(1) to F(0). The polypeptide is ATP synthase subunit b (Mycobacterium sp. (strain JLS)).